Reading from the N-terminus, the 485-residue chain is Glutamate--tRNA ligase (485 aa).

Positions 11–21 match the 'HIGH' region motif; that stretch reads PSPTGYMHVGN. Zn(2+) is bound by residues Cys108, Cys110, Cys135, and Asp137. A 'KMSKS' region motif is present at residues 252–256; that stretch reads KLSKR. Residue Lys255 participates in ATP binding.

Belongs to the class-I aminoacyl-tRNA synthetase family. Glutamate--tRNA ligase type 1 subfamily. In terms of assembly, monomer. The cofactor is Zn(2+).

It is found in the cytoplasm. The enzyme catalyses tRNA(Glu) + L-glutamate + ATP = L-glutamyl-tRNA(Glu) + AMP + diphosphate. In terms of biological role, catalyzes the attachment of glutamate to tRNA(Glu) in a two-step reaction: glutamate is first activated by ATP to form Glu-AMP and then transferred to the acceptor end of tRNA(Glu). This is Glutamate--tRNA ligase from Clostridium botulinum (strain Okra / Type B1).